The primary structure comprises 517 residues: Ribonuclease Y (517 aa).

Residues 1–21 (MIESLIALIAAIVGLGIGYLV) form a helical membrane-spanning segment. In terms of domain architecture, KH spans 207-273 (LINVINIKND…TKVIELLVED (67 aa)). Residues 333–426 (ALAHSLEVAH…VCAADTLSAA (94 aa)) enclose the HD domain.

Belongs to the RNase Y family.

It is found in the cell membrane. Its function is as follows. Endoribonuclease that initiates mRNA decay. The protein is Ribonuclease Y of Campylobacter jejuni subsp. jejuni serotype O:2 (strain ATCC 700819 / NCTC 11168).